We begin with the raw amino-acid sequence, 511 residues long: Apolipoprotein N-acyltransferase (511 aa).

A run of 6 helical transmembrane segments spans residues Leu-24 to Leu-44, Gly-58 to His-78, Phe-90 to Trp-110, Leu-125 to Phe-145, Val-163 to Val-183, and Gly-192 to Leu-212. One can recognise a CN hydrolase domain in the interval Ile-230 to Pro-470. Glu-269 serves as the catalytic Proton acceptor. Lys-330 is an active-site residue. Cys-382 (nucleophile) is an active-site residue. The helical transmembrane segment at Val-482–Leu-502 threads the bilayer.

The protein belongs to the CN hydrolase family. Apolipoprotein N-acyltransferase subfamily.

The protein localises to the cell inner membrane. It catalyses the reaction N-terminal S-1,2-diacyl-sn-glyceryl-L-cysteinyl-[lipoprotein] + a glycerophospholipid = N-acyl-S-1,2-diacyl-sn-glyceryl-L-cysteinyl-[lipoprotein] + a 2-acyl-sn-glycero-3-phospholipid + H(+). Its pathway is protein modification; lipoprotein biosynthesis (N-acyl transfer). In terms of biological role, catalyzes the phospholipid dependent N-acylation of the N-terminal cysteine of apolipoprotein, the last step in lipoprotein maturation. The chain is Apolipoprotein N-acyltransferase from Pseudomonas aeruginosa (strain UCBPP-PA14).